The sequence spans 101 residues: Large ribosomal subunit protein uL23c (101 aa).

It belongs to the universal ribosomal protein uL23 family. As to quaternary structure, part of the 50S ribosomal subunit.

The protein localises to the plastid. Its subcellular location is the chloroplast. In terms of biological role, binds to 23S rRNA. This chain is Large ribosomal subunit protein uL23c (rpl23), found in Cyanidium caldarium (Red alga).